A 397-amino-acid chain; its full sequence is Nuclear egress protein 2 (397 aa).

Residues 1–358 (MEMNKVLHQD…GPSRPQSGPW (358 aa)) are Perinuclear space-facing. 2 disordered regions span residues 205-245 (RTAG…PPPP) and 291-332 (AAAG…PSLE). The residue at position 216 (serine 216) is a Phosphoserine. 2 stretches are compositionally biased toward low complexity: residues 224-239 (PSCS…AAAG) and 291-301 (AAAGQDVGGSA). Basic residues predominate over residues 310-322 (SRRRGVSTHHRHP). Residues 359–381 (LPARFATLGPLVLALLLVLALLW) traverse the membrane as a helical segment. Residues 382–397 (RGHGQSSSPTRSAHRD) lie on the Nuclear side of the membrane.

It belongs to the herpesviridae NEC2 protein family. As to quaternary structure, forms a heterohexameric complex with NEC1. Interacts with host UBA7 and RNF170; this interaction promotes UBA7 proteasomal degradation. Post-translationally, phosphorylated. Phosphorylation by viral kinase UL97 at Ser-216 plays an important role for correct viral nuclear egress complex (NEC) localization.

The protein resides in the host nucleus inner membrane. Its function is as follows. Plays an essential role in virion nuclear egress, the first step of virion release from infected cell. Within the host nucleus, NEC1 interacts with the newly formed capsid through the vertexes and directs it to the inner nuclear membrane by associating with NEC2. Induces the budding of the capsid at the inner nuclear membrane as well as its envelopment into the perinuclear space. There, the NEC1/NEC2 complex promotes the fusion of the enveloped capsid with the outer nuclear membrane and the subsequent release of the viral capsid into the cytoplasm where it will reach the secondary budding sites in the host Golgi or trans-Golgi network. Inhibits host ISGylation and subsequent innate antiviral response by targeting host UBA7 for proteasomal degradation. This Human cytomegalovirus (strain AD169) (HHV-5) protein is Nuclear egress protein 2.